The sequence spans 361 residues: Phosphoserine aminotransferase (361 aa).

Positions 9 and 42 each coordinate L-glutamate. Pyridoxal 5'-phosphate is bound by residues 76-77, Trp-102, Thr-153, Asp-173, and Gln-196; that span reads AR. An N6-(pyridoxal phosphate)lysine modification is found at Lys-197. 238–239 contributes to the pyridoxal 5'-phosphate binding site; sequence NT.

It belongs to the class-V pyridoxal-phosphate-dependent aminotransferase family. SerC subfamily. In terms of assembly, homodimer. The cofactor is pyridoxal 5'-phosphate.

The protein localises to the cytoplasm. It catalyses the reaction O-phospho-L-serine + 2-oxoglutarate = 3-phosphooxypyruvate + L-glutamate. The catalysed reaction is 4-(phosphooxy)-L-threonine + 2-oxoglutarate = (R)-3-hydroxy-2-oxo-4-phosphooxybutanoate + L-glutamate. It participates in amino-acid biosynthesis; L-serine biosynthesis; L-serine from 3-phospho-D-glycerate: step 2/3. It functions in the pathway cofactor biosynthesis; pyridoxine 5'-phosphate biosynthesis; pyridoxine 5'-phosphate from D-erythrose 4-phosphate: step 3/5. In terms of biological role, catalyzes the reversible conversion of 3-phosphohydroxypyruvate to phosphoserine and of 3-hydroxy-2-oxo-4-phosphonooxybutanoate to phosphohydroxythreonine. The polypeptide is Phosphoserine aminotransferase (Sodalis glossinidius (strain morsitans)).